Here is a 368-residue protein sequence, read N- to C-terminus: 4-hydroxy-3-methylbut-2-en-1-yl diphosphate synthase (flavodoxin) (368 aa).

Residues Cys271, Cys274, Cys306, and Glu313 each coordinate [4Fe-4S] cluster.

Belongs to the IspG family. The cofactor is [4Fe-4S] cluster.

It catalyses the reaction (2E)-4-hydroxy-3-methylbut-2-enyl diphosphate + oxidized [flavodoxin] + H2O + 2 H(+) = 2-C-methyl-D-erythritol 2,4-cyclic diphosphate + reduced [flavodoxin]. It participates in isoprenoid biosynthesis; isopentenyl diphosphate biosynthesis via DXP pathway; isopentenyl diphosphate from 1-deoxy-D-xylulose 5-phosphate: step 5/6. In terms of biological role, converts 2C-methyl-D-erythritol 2,4-cyclodiphosphate (ME-2,4cPP) into 1-hydroxy-2-methyl-2-(E)-butenyl 4-diphosphate. This is 4-hydroxy-3-methylbut-2-en-1-yl diphosphate synthase (flavodoxin) from Mannheimia succiniciproducens (strain KCTC 0769BP / MBEL55E).